The chain runs to 271 residues: ATP synthase subunit a (271 aa).

A run of 5 helical transmembrane segments spans residues 38–58 (FWTL…LFLV), 100–120 (LIAP…LMDL), 146–166 (DVNI…FYSI), 220–240 (LIFI…LNVP), and 242–262 (AIFH…LTIV).

The protein belongs to the ATPase A chain family. As to quaternary structure, F-type ATPases have 2 components, CF(1) - the catalytic core - and CF(0) - the membrane proton channel. CF(1) has five subunits: alpha(3), beta(3), gamma(1), delta(1), epsilon(1). CF(0) has three main subunits: a(1), b(2) and c(9-12). The alpha and beta chains form an alternating ring which encloses part of the gamma chain. CF(1) is attached to CF(0) by a central stalk formed by the gamma and epsilon chains, while a peripheral stalk is formed by the delta and b chains.

The protein resides in the cell inner membrane. Key component of the proton channel; it plays a direct role in the translocation of protons across the membrane. The sequence is that of ATP synthase subunit a from Salmonella choleraesuis (strain SC-B67).